The primary structure comprises 344 residues: MYPLLFRTVLSRMDPEDAHHLASTAISLLPPSGLGWIARRLTAPDPSLAVDTLGLRFPSPFGVAAGFDKDARAVLGLGQLGFGHVEVGTVTAEAQPGNPRPRLFRLIEDRAVINRMGFNNGGAAALADRLRRLRTRRDRPVIGVNIGKTRVVAVEDAVADYVRTTRLVAPVADYLAVNVSSPNTPGLRGLQEIDLLRPLLTSIRDAADGVPVLVKIAPDLQDAEVERIAELATELGLAGVIATNTTLSRADLRTDAAVVEAAGAGGLSGAPLAPRALEVLRILRRVLPSDACIISVGGVDTADDVQSRLDAGATLVQGYTAFLYRGPLWARSINAGLARIRRPR.

FMN contacts are provided by residues 65 to 69 (AGFDK) and threonine 89. Residue lysine 69 participates in substrate binding. 114–118 (NRMGF) contacts substrate. 2 residues coordinate FMN: asparagine 145 and asparagine 178. Asparagine 178 contacts substrate. Serine 181 functions as the Nucleophile in the catalytic mechanism. Substrate is bound at residue asparagine 183. FMN is bound by residues lysine 215 and threonine 243. 244 to 245 (NT) serves as a coordination point for substrate. FMN contacts are provided by residues glycine 269, glycine 298, and 319-320 (YT).

The protein belongs to the dihydroorotate dehydrogenase family. Type 2 subfamily. In terms of assembly, monomer. The cofactor is FMN.

It localises to the cell membrane. It catalyses the reaction (S)-dihydroorotate + a quinone = orotate + a quinol. It functions in the pathway pyrimidine metabolism; UMP biosynthesis via de novo pathway; orotate from (S)-dihydroorotate (quinone route): step 1/1. In terms of biological role, catalyzes the conversion of dihydroorotate to orotate with quinone as electron acceptor. The protein is Dihydroorotate dehydrogenase (quinone) of Clavibacter sepedonicus (Clavibacter michiganensis subsp. sepedonicus).